The primary structure comprises 156 residues: Eosinophil cationic-type ribonuclease 3 (156 aa).

Residues 1–25 form the signal peptide; sequence MGPKLLESRLCLLLLLRLVLMLASC. H38 serves as the catalytic Proton acceptor. An N-linked (GlcNAc...) asparagine glycan is attached at N41. Cystine bridges form between C47/C106, C61/C119, C79/C134, and C86/C94. A substrate-binding site is contributed by 62–66; it reads KGLNT. N-linked (GlcNAc...) asparagine glycosylation is found at N89, N96, and N107. H151 (proton donor) is an active-site residue.

The protein belongs to the pancreatic ribonuclease family.

The sequence is that of Eosinophil cationic-type ribonuclease 3 (Ear3) from Mus musculus (Mouse).